The chain runs to 572 residues: Proline--tRNA ligase (572 aa).

It belongs to the class-II aminoacyl-tRNA synthetase family. ProS type 1 subfamily. As to quaternary structure, homodimer.

The protein resides in the cytoplasm. It catalyses the reaction tRNA(Pro) + L-proline + ATP = L-prolyl-tRNA(Pro) + AMP + diphosphate. Its function is as follows. Catalyzes the attachment of proline to tRNA(Pro) in a two-step reaction: proline is first activated by ATP to form Pro-AMP and then transferred to the acceptor end of tRNA(Pro). As ProRS can inadvertently accommodate and process non-cognate amino acids such as alanine and cysteine, to avoid such errors it has two additional distinct editing activities against alanine. One activity is designated as 'pretransfer' editing and involves the tRNA(Pro)-independent hydrolysis of activated Ala-AMP. The other activity is designated 'posttransfer' editing and involves deacylation of mischarged Ala-tRNA(Pro). The misacylated Cys-tRNA(Pro) is not edited by ProRS. The sequence is that of Proline--tRNA ligase from Leuconostoc mesenteroides subsp. mesenteroides (strain ATCC 8293 / DSM 20343 / BCRC 11652 / CCM 1803 / JCM 6124 / NCDO 523 / NBRC 100496 / NCIMB 8023 / NCTC 12954 / NRRL B-1118 / 37Y).